The primary structure comprises 375 residues: 4-hydroxy-3-methylbut-2-en-1-yl diphosphate synthase (flavodoxin) (375 aa).

Residues Cys270, Cys273, Cys305, and Glu312 each contribute to the [4Fe-4S] cluster site.

This sequence belongs to the IspG family. [4Fe-4S] cluster is required as a cofactor.

The catalysed reaction is (2E)-4-hydroxy-3-methylbut-2-enyl diphosphate + oxidized [flavodoxin] + H2O + 2 H(+) = 2-C-methyl-D-erythritol 2,4-cyclic diphosphate + reduced [flavodoxin]. It functions in the pathway isoprenoid biosynthesis; isopentenyl diphosphate biosynthesis via DXP pathway; isopentenyl diphosphate from 1-deoxy-D-xylulose 5-phosphate: step 5/6. Its function is as follows. Converts 2C-methyl-D-erythritol 2,4-cyclodiphosphate (ME-2,4cPP) into 1-hydroxy-2-methyl-2-(E)-butenyl 4-diphosphate. The sequence is that of 4-hydroxy-3-methylbut-2-en-1-yl diphosphate synthase (flavodoxin) from Yersinia pestis (strain Pestoides F).